Reading from the N-terminus, the 340-residue chain is CMP-N-acetylneuraminate-beta-galactosamide-alpha-2,3-sialyltransferase 1 (340 aa).

Over 1–13 (MVTLRKRTLKVLT) the chain is Cytoplasmic. A helical; Signal-anchor for type II membrane protein membrane pass occupies residues 14–34 (FLVLFIFLTSFFLNYSHTMVA). Over 35–340 (TTWFPKQMVL…INKIRIFKGR (306 aa)) the chain is Lumenal. Cystine bridges form between C59–C64, C61–C139, and C142–C281. N79 is a glycosylation site (N-linked (GlcNAc...) asparagine). Q105 lines the substrate pocket. N114 is a glycosylation site (N-linked (GlcNAc...) asparagine). 2 residues coordinate substrate: N147 and N170. The N-linked (GlcNAc...) asparagine glycan is linked to N201. 6 residues coordinate substrate: Y230, Y266, G270, G290, H299, and H316. N323 is a glycosylation site (N-linked (GlcNAc...) asparagine).

The protein belongs to the glycosyltransferase 29 family. In terms of processing, the soluble form derives from the membrane form by proteolytic processing.

The protein resides in the golgi apparatus. The protein localises to the golgi stack membrane. It localises to the trans-Golgi network membrane. It is found in the secreted. The catalysed reaction is a beta-D-galactosyl-(1-&gt;3)-N-acetyl-alpha-D-galactosaminyl derivative + CMP-N-acetyl-beta-neuraminate = an N-acetyl-alpha-neuraminyl-(2-&gt;3)-beta-D-galactosyl-(1-&gt;3)-N-acetyl-alpha-D-galactosaminyl derivative + CMP + H(+). It catalyses the reaction a ganglioside GM1 + CMP-N-acetyl-beta-neuraminate = a ganglioside GD1a + CMP + H(+). The enzyme catalyses a ganglioside GM1 (d18:1(4E)) + CMP-N-acetyl-beta-neuraminate = a ganglioside GD1a (d18:1(4E)) + CMP + H(+). It carries out the reaction ganglioside GM1 (d18:1(4E)/18:0) + CMP-N-acetyl-beta-neuraminate = ganglioside GD1a (18:1(4E)/18:0) + CMP + H(+). The catalysed reaction is a ganglioside GA1 + CMP-N-acetyl-beta-neuraminate = a ganglioside GM1b + CMP + H(+). It catalyses the reaction a ganglioside GA1 (d18:1(4E)) + CMP-N-acetyl-beta-neuraminate = a ganglioside GM1b (d18:1(4E)) + CMP + H(+). The enzyme catalyses a ganglioside GD1b + CMP-N-acetyl-beta-neuraminate = a ganglioside GT1b + CMP + H(+). It carries out the reaction a 3-O-[beta-D-galactosyl-(1-&gt;3)-N-acetyl-alpha-D-galactosaminyl]-L-threonyl-[protein] + CMP-N-acetyl-beta-neuraminate = a 3-O-[N-acetyl-alpha-neuraminyl-(2-&gt;3)-beta-D-galactosyl-(1-&gt;3)-N-acetyl-alpha-D-galactosaminyl]-L-threonyl-[protein] + CMP + H(+). The catalysed reaction is a 3-O-[beta-D-galactosyl-(1-&gt;3)-N-acetyl-alpha-D-galactosaminyl]-L-seryl-[protein] + CMP-N-acetyl-beta-neuraminate = 3-O-[N-acetyl-alpha-neuraminyl-(2-&gt;3)-beta-D-galactosyl-(1-&gt;3)-N-acetyl-alpha-D-galactosaminyl]-L-seryl-[protein] + CMP + H(+). It functions in the pathway protein modification; protein glycosylation. The protein operates within glycolipid biosynthesis. A beta-galactoside alpha2-&gt;3 sialyltransferase involved in terminal sialylation of glycoproteins and glycolipids. Catalyzes the transfer of sialic acid (N-acetyl-neuraminic acid; Neu5Ac) from the nucleotide sugar donor CMP-Neu5Ac onto acceptor Galbeta-(1-&gt;3)-GalNAc-terminated glycoconjugates through an alpha2-3 linkage. Adds sialic acid to the core 1 O-glycan, Galbeta-(1-&gt;3)-GalNAc-O-Ser/Thr, which is a major structure of mucin-type O-glycans. As part of a homeostatic mechanism that regulates CD8-positive T cell numbers, sialylates core 1 O-glycans of T cell glycoproteins, SPN/CD43 and PTPRC/CD45. Prevents premature apoptosis of thymic CD8-positive T cells prior to peripheral emigration, whereas in the secondary lymphoid organs controls the survival of CD8-positive memory T cells generated following a successful immune response. Transfers sialic acid to asialofetuin, presumably onto Galbeta-(1-&gt;3)-GalNAc-O-Ser. Sialylates GM1a, GA1 and GD1b gangliosides to form GD1a, GM1b and GT1b, respectively. The polypeptide is CMP-N-acetylneuraminate-beta-galactosamide-alpha-2,3-sialyltransferase 1 (ST3GAL1) (Pan troglodytes (Chimpanzee)).